Consider the following 25-residue polypeptide: Dermaseptin-5.2TR (25 aa).

The residue at position 25 (V25) is a Valine amide.

Expressed by the skin glands.

The protein resides in the secreted. Has antimicrobial activity. This chain is Dermaseptin-5.2TR, found in Phyllomedusa trinitatis (Trinidad leaf frog).